A 322-amino-acid polypeptide reads, in one-letter code: tRNA uridine(34) hydroxylase (322 aa).

The Rhodanese domain occupies 125–219 (QDPDTIVIDA…YGKDPEVKGQ (95 aa)). Cysteine 179 acts as the Cysteine persulfide intermediate in catalysis.

It belongs to the TrhO family.

The enzyme catalyses uridine(34) in tRNA + AH2 + O2 = 5-hydroxyuridine(34) in tRNA + A + H2O. Catalyzes oxygen-dependent 5-hydroxyuridine (ho5U) modification at position 34 in tRNAs. This is tRNA uridine(34) hydroxylase from Bacillus velezensis (strain DSM 23117 / BGSC 10A6 / LMG 26770 / FZB42) (Bacillus amyloliquefaciens subsp. plantarum).